The following is a 423-amino-acid chain: MQDIKQRDIEHVILVGCQVNREDEEFEQSIAELESLAKTAKGKVVGTITQKREKVESSTYVGKGKVQELVHLIEETEADLVIFNDELQASQMRNLHAECGIAVIDRTQLILDIFASRAKSREGKLQVELAQLKYLLPRLSGQGLALSRQGGGIGTRGPGETQLETDRRHIRRRMNEIERQLEAVVNHRVRYREKRKKNAAIQLALVGYTNAGKSTLLNRLTKADTLEEDQLFATLDPTTRQLHLPSGFSVLMSDTVGFIQDLPTTLVASFRSTLEELKEADLLLHVVDCSHPDYEQHERTVIKLIEELEAHSIPQLLIYNKADQKTDVFIPTHTKDSIIMSAYNEEDLLALKVKIEQALKGMMMPYRSIIKADEGHILAAARQETMIHTQQFDESREAYVIEGHALENTSIYSQLKERLLKES.

In terms of domain architecture, Hflx-type G spans 201 to 363 (IQLALVGYTN…KIEQALKGMM (163 aa)). Residues 207–214 (GYTNAGKS), 232–236 (FATLD), 254–257 (DTVG), 320–323 (NKAD), and 341–343 (SAY) contribute to the GTP site. Mg(2+) is bound by residues S214 and T234.

It belongs to the TRAFAC class OBG-HflX-like GTPase superfamily. HflX GTPase family. Monomer. Associates with the 50S ribosomal subunit. Requires Mg(2+) as cofactor.

The protein localises to the cytoplasm. In terms of biological role, GTPase that associates with the 50S ribosomal subunit and may have a role during protein synthesis or ribosome biogenesis. The protein is GTPase HflX of Alkalihalophilus pseudofirmus (strain ATCC BAA-2126 / JCM 17055 / OF4) (Bacillus pseudofirmus).